We begin with the raw amino-acid sequence, 485 residues long: Pentatricopeptide repeat-containing protein At1g62720 (485 aa).

PPR repeat units follow at residues 68-102, 103-137, 138-172, 173-207, 208-242, 243-277, 278-312, 313-347, 348-378, 380-414, 415-449, and 450-484; these read SIVD…GIGH, DLYS…GYEP, DVVT…GFRP, DVVI…GVRA, DAVT…DIVP, NVIT…CVDP, DVFT…GCLP, DVVT…GLVG, DTIT…MDSR, NIRT…EIEL, DITT…GLKP, and DVVS…GLLP.

The protein belongs to the PPR family. P subfamily.

The chain is Pentatricopeptide repeat-containing protein At1g62720 from Arabidopsis thaliana (Mouse-ear cress).